Here is a 330-residue protein sequence, read N- to C-terminus: Protein pelota homolog (330 aa).

It belongs to the eukaryotic release factor 1 family. Pelota subfamily. In terms of assembly, monomer. A divalent metal cation is required as a cofactor.

The protein resides in the cytoplasm. Its function is as follows. May function in recognizing stalled ribosomes, interact with stem-loop structures in stalled mRNA molecules, and effect endonucleolytic cleavage of the mRNA. May play a role in the release non-functional ribosomes and degradation of damaged mRNAs. Has endoribonuclease activity. The polypeptide is Protein pelota homolog (Pyrobaculum islandicum (strain DSM 4184 / JCM 9189 / GEO3)).